The chain runs to 428 residues: Enolase (428 aa).

Gln163 is a binding site for (2R)-2-phosphoglycerate. The active-site Proton donor is Glu205. Asp242, Glu284, and Asp311 together coordinate Mg(2+). Residues Lys336, Arg365, Ser366, and Lys387 each contribute to the (2R)-2-phosphoglycerate site. Lys336 serves as the catalytic Proton acceptor.

The protein belongs to the enolase family. The cofactor is Mg(2+).

Its subcellular location is the cytoplasm. It localises to the secreted. It is found in the cell surface. The enzyme catalyses (2R)-2-phosphoglycerate = phosphoenolpyruvate + H2O. Its pathway is carbohydrate degradation; glycolysis; pyruvate from D-glyceraldehyde 3-phosphate: step 4/5. In terms of biological role, catalyzes the reversible conversion of 2-phosphoglycerate (2-PG) into phosphoenolpyruvate (PEP). It is essential for the degradation of carbohydrates via glycolysis. The protein is Enolase of Tropheryma whipplei (strain TW08/27) (Whipple's bacillus).